The sequence spans 329 residues: Beta-ketoacyl-[acyl-carrier-protein] synthase III (329 aa).

Residues Cys-123 and His-256 contribute to the active site. The interval 257-261 is ACP-binding; that stretch reads QANIR. Asn-286 is a catalytic residue.

Belongs to the thiolase-like superfamily. FabH family. As to quaternary structure, homodimer.

Its subcellular location is the cytoplasm. It catalyses the reaction malonyl-[ACP] + acetyl-CoA + H(+) = 3-oxobutanoyl-[ACP] + CO2 + CoA. Its pathway is lipid metabolism; fatty acid biosynthesis. Its function is as follows. Catalyzes the condensation reaction of fatty acid synthesis by the addition to an acyl acceptor of two carbons from malonyl-ACP. Catalyzes the first condensation reaction which initiates fatty acid synthesis and may therefore play a role in governing the total rate of fatty acid production. Possesses both acetoacetyl-ACP synthase and acetyl transacylase activities. Its substrate specificity determines the biosynthesis of branched-chain and/or straight-chain of fatty acids. This Burkholderia pseudomallei (strain 1710b) protein is Beta-ketoacyl-[acyl-carrier-protein] synthase III.